The sequence spans 467 residues: Sialic acid-binding Ig-like lectin 7 (467 aa).

Residues 1–18 form the signal peptide; the sequence is MLLLLLLPLLWGRERVEG. Residues 19 to 353 are Extracellular-facing; sequence QKSNRKDYSL…KMRPVSGVLL (335 aa). The 84-residue stretch at 39–122 folds into the Ig-like V-type domain; that stretch reads GMCVHVRCSF…ARMSDAGRYF (84 aa). Cysteine 46 and cysteine 106 form a disulfide bridge. Asparagine 105 carries an N-linked (GlcNAc...) asparagine glycan. N-acetylneuraminate-binding positions include arginine 124 and 131 to 135; that span reads KWNYK. N-linked (GlcNAc...) asparagine glycosylation is found at asparagine 142 and asparagine 165. Residues 150–233 enclose the Ig-like C2-type 1 domain; that stretch reads PNILIPGTLE…AGVTTNRTIQ (84 aa). The cysteines at positions 168 and 217 are disulfide-linked. N-linked (GlcNAc...) asparagine glycosylation is found at asparagine 229, asparagine 235, asparagine 242, and asparagine 260. Residues 240–336 form the Ig-like C2-type 2 domain; it reads PQNLTVTVFQ…GSQHVSLNLS (97 aa). Cysteines 276 and 320 form a disulfide. An N-linked (GlcNAc...) asparagine glycan is attached at asparagine 334. A helical membrane pass occupies residues 354–376; sequence GAVGGAGATALVFLSFCVIFIVV. Over 377–467 the chain is Cytoplasmic; it reads RSCRKKSARP…NEYSEIKIPK (91 aa). A compositionally biased stretch (polar residues) spans 401-412; it reads IRGSASQGNLTE. A disordered region spans residues 401–431; the sequence is IRGSASQGNLTESWADDNPRHHGLAAHSSGE. Position 429 is a phosphoserine (serine 429). Residues 435–440 carry the ITIM motif motif; the sequence is IQYAPL. Residues 443 to 467 are disordered; that stretch reads HKGEPQDLSGQEATNNEYSEIKIPK. Residues 450–460 show a composition bias toward polar residues; it reads LSGQEATNNEY.

This sequence belongs to the immunoglobulin superfamily. SIGLEC (sialic acid binding Ig-like lectin) family. Interacts with PTPN6/SHP-1 upon phosphorylation. Post-translationally, tyrosine phosphorylated. In terms of tissue distribution, predominantly expressed by resting and activated natural killer cells and at lower levels by granulocytes and monocytes. High expression found in placenta, liver, lung, spleen, and peripheral blood leukocytes.

The protein localises to the membrane. Its function is as follows. Putative adhesion molecule that mediates sialic-acid dependent binding to cells. Preferentially binds to alpha-2,3- and alpha-2,6-linked sialic acid. Also binds disialogangliosides (disialogalactosyl globoside, disialyl lactotetraosylceramide and disialyl GalNAc lactotetraoslylceramide). The sialic acid recognition site may be masked by cis interactions with sialic acids on the same cell surface. In the immune response, may act as an inhibitory receptor upon ligand induced tyrosine phosphorylation by recruiting cytoplasmic phosphatase(s) via their SH2 domain(s) that block signal transduction through dephosphorylation of signaling molecules. Mediates inhibition of natural killer cells cytotoxicity. May play a role in hemopoiesis. Inhibits differentiation of CD34+ cell precursors towards myelomonocytic cell lineage and proliferation of leukemic myeloid cells (in vitro). This chain is Sialic acid-binding Ig-like lectin 7 (SIGLEC7), found in Homo sapiens (Human).